Reading from the N-terminus, the 1126-residue chain is Probable serine/threonine-protein kinase DDB_G0280111 (1126 aa).

One can recognise a Protein kinase domain in the interval 16 to 295 (LNFVKQIAEG…NLLRNQQPLF (280 aa)). ATP contacts are provided by residues 22 to 30 (IAEGGFSYV) and Lys45. Asp147 acts as the Proton acceptor in catalysis. The span at 314–333 (NNNNNINNNNNNNIVNGKNI) shows a compositional bias: low complexity. Disordered stretches follow at residues 314 to 469 (NNNN…NGNN), 760 to 901 (LNLN…QQQQ), 944 to 1072 (TPSS…DEVR), and 1095 to 1126 (NKQSRMNNPNNLFDEGDSGFGDGEEEDEGLLN). Positions 347 to 364 (TPTPPPPAPSQSPSPSPS) are enriched in pro residues. Over residues 367–390 (VVNNIENNSNGLEHSNSNGNISQP) the composition is skewed to polar residues. 3 stretches are compositionally biased toward low complexity: residues 413–422 (PPNNSNNSFD), 432–469 (NLSNNPFNVNSNDNSNSSNNNNNNNNNNNNNNNNNGNN), and 760–795 (LNLNNNNNNNNNSNNSNNSNNSNSGNLSGNASLNSS). Polar residues-rich tracts occupy residues 796–825 (FDNINSSNPFSTEPTFNPFSATTTNTSESG) and 833–845 (EPTSNPSPRYQQS). Residues 846 to 856 (NNNNNNNNNNN) are compositionally biased toward low complexity. Residues 857–866 (GTPISLTPGS) are compositionally biased toward polar residues. Low complexity-rich tracts occupy residues 886-901 (QQQQHPQQQQQQQQQQ), 953-971 (PSTGPTTAAQQQQQQQQSQ), and 1003-1035 (NVNINNNNNSHVSAPHSLNSSSSSISSISNPNL). The segment covering 1095-1105 (NKQSRMNNPNN) has biased composition (polar residues). Over residues 1108 to 1126 (DEGDSGFGDGEEEDEGLLN) the composition is skewed to acidic residues.

It belongs to the protein kinase superfamily. Ser/Thr protein kinase family.

The catalysed reaction is L-seryl-[protein] + ATP = O-phospho-L-seryl-[protein] + ADP + H(+). It catalyses the reaction L-threonyl-[protein] + ATP = O-phospho-L-threonyl-[protein] + ADP + H(+). In Dictyostelium discoideum (Social amoeba), this protein is Probable serine/threonine-protein kinase DDB_G0280111.